The following is a 145-amino-acid chain: UPF0179 protein TV1250 (145 aa).

The protein belongs to the UPF0179 family.

This Thermoplasma volcanium (strain ATCC 51530 / DSM 4299 / JCM 9571 / NBRC 15438 / GSS1) protein is UPF0179 protein TV1250.